The primary structure comprises 574 residues: Sorting nexin-33 (574 aa).

Residues methionine 1–proline 61 form the SH3 domain. Serine 77 carries the phosphoserine modification. Polar residues predominate over residues glycine 79–methionine 90. A disordered region spans residues glycine 79–aspartate 116. The residue at position 92 (serine 92) is a Phosphoserine. The region spanning phenylalanine 230–glutamine 340 is the PX domain. In terms of domain architecture, BAR spans leucine 371–leucine 574.

This sequence belongs to the sorting nexin family. As to quaternary structure, homodimer (via BAR domain). Interacts with ADAM15. Interacts with FASLG. Interacts (via SH3 domain) with DNM1 and DNM2. Interacts with WASL. Interacts with FCHSD1 (via the F-BAR domain). Post-translationally, phosphorylated. Detected in brain (at protein level).

The protein localises to the cytoplasm. It localises to the cytosol. It is found in the membrane. The protein resides in the cytoplasmic vesicle membrane. Plays a role in the reorganization of the cytoskeleton, endocytosis and cellular vesicle trafficking via its interactions with membranes, WASL, DNM1 and DNM2. Acts both during interphase and at the end of mitotic cell divisions. Required for efficient progress through mitosis and cytokinesis. Required for normal formation of the cleavage furrow at the end of mitosis. Modulates endocytosis of cell-surface proteins, such as APP and PRNP; this then modulates the secretion of APP and PRNP peptides. Promotes membrane tubulation (in vitro). May promote the formation of macropinosomes. The chain is Sorting nexin-33 (Snx33) from Mus musculus (Mouse).